The primary structure comprises 516 residues: Levanbiose-producing levanase (516 aa).

The Cytoplasmic portion of the chain corresponds to 1–5; the sequence is MNYIK. A helical membrane pass occupies residues 6 to 26; it reads AGKWLTVFLTFLGILLFIDLF. The Extracellular segment spans residues 27–516; it reads PKEEHDQKTK…TVKHFDSIHE (490 aa). Substrate contacts are provided by residues 55-58, 116-117, 181-182, Glu230, and Trp318; these read WKND, WT, and RD. Asp58 is a catalytic residue.

The protein belongs to the glycosyl hydrolase 32 family.

The protein resides in the cell membrane. The catalysed reaction is Hydrolysis of (2-&gt;6)-beta-D-fructofuranan, to remove successive disaccharide residues as levanbiose, i.e. 6-(beta-D-fructofuranosyl)-D-fructose, from the end of the chain.. Its function is as follows. Catalyzes the degradation of levan mainly into levanbiose (difructose). Is not active on sucrose. This Bacillus subtilis (strain 168) protein is Levanbiose-producing levanase (levB).